A 551-amino-acid polypeptide reads, in one-letter code: Alkaline/neutral invertase CINV1 (551 aa).

The residue at position 1 (M1) is an N-acetylmethionine. 4 positions are modified to phosphoserine: S11, S14, S44, and S61. The interval 50–74 (TGYSRHDGIHDSPRGRSVLDTPLSS) is disordered. Over residues 53–63 (SRHDGIHDSPR) the composition is skewed to basic and acidic residues. T70 carries the post-translational modification Phosphothreonine. Position 547 is a phosphoserine (S547).

This sequence belongs to the glycosyl hydrolase 100 family. As to quaternary structure, forms homohexamers. Interacts with PIP5K9. Interaction with PIP5K9 represses CINV1 activity. Interacts with GRF1, GRF2, GRF3, GRF4, GRF5, GRF6, GRF7, GRF8 and GRF10; these interactions are dependent of the phosphorylation at Ser-547. Phosphorylated at Ser-547 by CPK3 and CPK21. As to expression, expressed in radicle, hypocotyls, root tips and vascular cylinder, leaf vasculature, shoot stipules, trichomes, stem, stigma apex and base of siliques.

Its subcellular location is the cytoplasm. The protein resides in the cytosol. It is found in the nucleus. It carries out the reaction Hydrolysis of terminal non-reducing beta-D-fructofuranoside residues in beta-D-fructofuranosides.. Cytosolic invertase that specifically cleaves sucrose into glucose and fructose and is involved in the regulation of multiple tissue development including primary root elongation, root hair growth, leaf and silique development, and floral transition. Is involved in osmotic stress-induced inhibition on lateral root growth by controlling the concentration of hexose in cells. May regulate sugar-mediated root development by controlling sucrose catabolism in root cells. Contributes to carbon partitioning and cellulose biosynthesis in seedlings. The sequence is that of Alkaline/neutral invertase CINV1 from Arabidopsis thaliana (Mouse-ear cress).